The chain runs to 95 residues: Protein TusB (95 aa).

It belongs to the DsrH/TusB family. As to quaternary structure, heterohexamer, formed by a dimer of trimers. The hexameric TusBCD complex contains 2 copies each of TusB, TusC and TusD. The TusBCD complex interacts with TusE.

The protein resides in the cytoplasm. In terms of biological role, part of a sulfur-relay system required for 2-thiolation of 5-methylaminomethyl-2-thiouridine (mnm(5)s(2)U) at tRNA wobble positions. In Salmonella dublin (strain CT_02021853), this protein is Protein TusB.